The primary structure comprises 915 residues: Probable dipeptidyl-aminopeptidase B (915 aa).

Residues 1 to 82 (MAPPFTDDPE…GAFLGPPGVP (82 aa)) are disordered. At 1–94 (MAPPFTDDPE…RQPMDRGFRR (94 aa)) the chain is on the cytoplasmic side. Over residues 15 to 32 (STSRLSQDSLSSVSTTSL) the composition is skewed to low complexity. Residues 36–62 (RIQEEMDRDPSASRSARRDLLPATKDE) show a composition bias toward basic and acidic residues. The helical; Signal-anchor for type II membrane protein transmembrane segment at 95–115 (ILIIIGAVFVGAWLAGLGIFV) threads the bilayer. Residues 116 to 915 (LSGSYKHESD…IDTKKRRHVS (800 aa)) lie on the Vacuolar side of the membrane. Residues asparagine 355 and asparagine 577 are each glycosylated (N-linked (GlcNAc...) asparagine). Serine 760 (charge relay system) is an active-site residue. N-linked (GlcNAc...) asparagine glycosylation occurs at asparagine 819. Residues aspartate 837 and histidine 870 each act as charge relay system in the active site.

It belongs to the peptidase S9B family.

The protein resides in the vacuole membrane. It catalyses the reaction Release of an N-terminal dipeptide, Xaa-Yaa-|-Zaa-, from a polypeptide, preferentially when Yaa is Pro, provided Zaa is neither Pro nor hydroxyproline.. Its function is as follows. Type IV dipeptidyl-peptidase which removes N-terminal dipeptides sequentially from polypeptides having unsubstituted N-termini provided that the penultimate residue is proline. This chain is Probable dipeptidyl-aminopeptidase B (DAPB), found in Metarhizium robertsii (strain ARSEF 23 / ATCC MYA-3075) (Metarhizium anisopliae (strain ARSEF 23)).